Consider the following 341-residue polypeptide: DNA-directed RNA polymerase subunit alpha (341 aa).

Residues 1–237 (MLSLSKNWNA…EQLQLFISFE (237 aa)) form an alpha N-terminal domain (alpha-NTD) region. An alpha C-terminal domain (alpha-CTD) region spans residues 247 to 341 (TDALPFSPYL…LSKRYEDSYN (95 aa)).

Belongs to the RNA polymerase alpha chain family. As to quaternary structure, homodimer. The RNAP catalytic core consists of 2 alpha, 1 beta, 1 beta' and 1 omega subunit. When a sigma factor is associated with the core the holoenzyme is formed, which can initiate transcription.

The catalysed reaction is RNA(n) + a ribonucleoside 5'-triphosphate = RNA(n+1) + diphosphate. In terms of biological role, DNA-dependent RNA polymerase catalyzes the transcription of DNA into RNA using the four ribonucleoside triphosphates as substrates. This chain is DNA-directed RNA polymerase subunit alpha, found in Rickettsia bellii (strain RML369-C).